Here is a 494-residue protein sequence, read N- to C-terminus: MQDHASSKDDRALQRTRHWISGYSPDVRIQERGVLVSVGDGVAWIKGLPSARMEELLDFEDGSLGMVFDLCEELVGAVILQQTGSLTAGQEVHRTRRPLGLLAHDSLLGRVIDPTGRPLDGQSPLHEGAWVNLNSPTPAIVERDFVHEPLYTGIRMIDAMIPIGRGQRQLIIGDEGLGRTSIALNAVLHQKDKDVRCIYVLIGQKRGAAVNVMQTLQRHGADAYTTLVVADAGSPPGLQYLAPFAGSALASHWMRQGRHVLMVYDDLSSHARSYRELSLLLRRPPGREAYPGDVFSVHARLLEQATCLSPEQGGGSLTALPIAETQQGEIAAYIPTNLISITDGQIYLERSLFAAGVRPAIDVGRSVSRIGGKAQHPAIKHEAIRMKLDYSRFLELEIFTRFGAKLDPGMQTVIKRGQLLRELLKQDRFERFSPEQELAWMIAYNEGLLDEHPLTDIPAALLQIQSRLDARLSLETPREDWTAALQKMLTTADV.

This sequence belongs to the ATPase alpha/beta chains family. In terms of assembly, F-type ATPases have 2 components, CF(1) - the catalytic core - and CF(0) - the membrane proton channel. CF(1) has five subunits: alpha(3), beta(3), gamma(1), delta(1), epsilon(1). CF(0) has three main subunits: a(1), b(2) and c(9-12). The alpha and beta chains form an alternating ring which encloses part of the gamma chain. CF(1) is attached to CF(0) by a central stalk formed by the gamma and epsilon chains, while a peripheral stalk is formed by the delta and b chains.

The protein localises to the cell inner membrane. It catalyses the reaction ATP + H2O + 4 H(+)(in) = ADP + phosphate + 5 H(+)(out). Functionally, produces ATP from ADP in the presence of a proton gradient across the membrane. The alpha chain is a regulatory subunit. This Hahella chejuensis (strain KCTC 2396) protein is ATP synthase subunit alpha 1.